Reading from the N-terminus, the 161-residue chain is Allophycocyanin beta chain (161 aa).

An N4-methylasparagine modification is found at Asn-71. Cys-81 is a binding site for (2R,3E)-phycocyanobilin.

The protein belongs to the phycobiliprotein family. As to quaternary structure, heterodimer of an alpha and a beta chain. Contains one covalently linked phycocyanobilin chromophore.

It is found in the plastid. The protein resides in the chloroplast thylakoid membrane. Light-harvesting photosynthetic bile pigment-protein from the phycobiliprotein complex. Allophycocyanin has a maximum absorption at approximately 650 nanometers. The polypeptide is Allophycocyanin beta chain (apcB) (Aglaothamnion neglectum (Red alga)).